The following is a 277-amino-acid chain: MAIKKYKPTSNGRRGMTTSDFAEITTDKPEKSLLAPLHRKGGRNNQGRLTVRHQGGGHKRQYRIIDFKRDKDGIPGRVATIEYDPNRSANIALVNYADGEKRYILAPKGIQVGTEVTSGPEADIKPGNALPLINIPVGTVVHNIELKPGKGGQLVRSAGTSAQVLGKEGKYVLVRLNSGEVRMILSACRATIGQVGNEQHELINIGKAGRSRWKGVRPTVRGSVMNPNDHPHGGGEGRAPIGRKSPMSPWGKPTLGFKTRKKTNKSDKFIVRRRKNK.

Disordered regions lie at residues 38-58 (HRKGGRNNQGRLTVRHQGGGH) and 219-277 (TVRG…RKNK).

The protein belongs to the universal ribosomal protein uL2 family. In terms of assembly, part of the 50S ribosomal subunit. Forms a bridge to the 30S subunit in the 70S ribosome.

In terms of biological role, one of the primary rRNA binding proteins. Required for association of the 30S and 50S subunits to form the 70S ribosome, for tRNA binding and peptide bond formation. It has been suggested to have peptidyltransferase activity; this is somewhat controversial. Makes several contacts with the 16S rRNA in the 70S ribosome. This chain is Large ribosomal subunit protein uL2, found in Bacillus pumilus (strain SAFR-032).